The sequence spans 551 residues: Interleukin-2 receptor subunit beta (551 aa).

The signal sequence occupies residues M1 to A26. Topologically, residues A27–T240 are extracellular. N29, N43, and N71 each carry an N-linked (GlcNAc...) asparagine glycan. C36 and C46 are oxidised to a cystine. A disulfide bond links C74 and C86. Residues A134–A234 form the Fibronectin type-III domain. N-linked (GlcNAc...) asparagine glycosylation occurs at N149. Positions W220–S224 match the WSXWS motif motif. A helical transmembrane segment spans residues I241–I265. Residues N266 to V551 are Cytoplasmic-facing. The Box 1 motif motif lies at L278–S286. Disordered stretches follow at residues E389–A417, F430–D484, and A496–P517.

Belongs to the type I cytokine receptor family. Type 4 subfamily. As to quaternary structure, non-covalent dimer of an alpha and a beta subunit. IL2R exists in 3 different forms: a high affinity dimer, an intermediate affinity monomer (beta subunit), and a low affinity monomer (alpha subunit). The high and intermediate affinity forms also associate with a gamma subunit. Interacts with SHB upon interleukin stimulation.

Its subcellular location is the cell membrane. The protein resides in the cell surface. Functionally, receptor for interleukin-2. This beta subunit is involved in receptor mediated endocytosis and transduces the mitogenic signals of IL2. Probably in association with IL15RA, involved in the stimulation of neutrophil phagocytosis by IL15. The polypeptide is Interleukin-2 receptor subunit beta (IL2RB) (Macaca fascicularis (Crab-eating macaque)).